The following is a 297-amino-acid chain: Formylmethanofuran--tetrahydromethanopterin formyltransferase (297 aa).

It belongs to the FTR family. In terms of assembly, homotetramer.

Its subcellular location is the cytoplasm. The catalysed reaction is N-formylmethanofuran + 5,6,7,8-tetrahydromethanopterin + H(+) = N(5)-formyl-5,6,7,8-tetrahydromethanopterin + methanofuran. Its pathway is one-carbon metabolism; methanogenesis from CO(2); 5,10-methenyl-5,6,7,8-tetrahydromethanopterin from CO(2): step 2/3. Catalyzes the reversible transfer of a formyl group from formylmethanofuran (formyl-MFR) to tetrahydromethanopterin (H(4)MPT) to produce 5-formyl tetrahydromethanopterin (5-formyl-H(4)MPT) and methanofuran (MFR). The polypeptide is Formylmethanofuran--tetrahydromethanopterin formyltransferase (Methanothermus fervidus (strain ATCC 43054 / DSM 2088 / JCM 10308 / V24 S)).